A 270-amino-acid polypeptide reads, in one-letter code: 3-methyl-2-oxobutanoate hydroxymethyltransferase (270 aa).

Asp43 and Asp82 together coordinate Mg(2+). 3-methyl-2-oxobutanoate-binding positions include 43–44 (DS), Asp82, and Lys112. Glu114 contributes to the Mg(2+) binding site. Glu179 functions as the Proton acceptor in the catalytic mechanism.

Belongs to the PanB family. As to quaternary structure, homodecamer; pentamer of dimers. Requires Mg(2+) as cofactor.

It localises to the cytoplasm. The enzyme catalyses 3-methyl-2-oxobutanoate + (6R)-5,10-methylene-5,6,7,8-tetrahydrofolate + H2O = 2-dehydropantoate + (6S)-5,6,7,8-tetrahydrofolate. The protein operates within cofactor biosynthesis; (R)-pantothenate biosynthesis; (R)-pantoate from 3-methyl-2-oxobutanoate: step 1/2. In terms of biological role, catalyzes the reversible reaction in which hydroxymethyl group from 5,10-methylenetetrahydrofolate is transferred onto alpha-ketoisovalerate to form ketopantoate. This chain is 3-methyl-2-oxobutanoate hydroxymethyltransferase, found in Staphylococcus saprophyticus subsp. saprophyticus (strain ATCC 15305 / DSM 20229 / NCIMB 8711 / NCTC 7292 / S-41).